We begin with the raw amino-acid sequence, 610 residues long: E-selectin (610 aa).

The first 21 residues, 1 to 21 (MIASQFLSALTLVLLIKESGA), serve as a signal peptide directing secretion. One can recognise a C-type lectin domain in the interval 22-139 (WSYNTSTEAM…CSKKKLALCY (118 aa)). Over 22 to 556 (WSYNTSTEAM…CEAPTESNIP (535 aa)) the chain is Extracellular. N-linked (GlcNAc...) asparagine glycosylation is present at asparagine 25. Disulfide bonds link cysteine 40-cysteine 138, cysteine 111-cysteine 130, cysteine 143-cysteine 154, cysteine 148-cysteine 163, and cysteine 165-cysteine 174. 3 residues coordinate Ca(2+): glutamate 101, asparagine 103, and glutamate 109. Residues 101 to 109 (EPNNRQKDE), 113 to 118 (EIYIKR), and 126 to 128 (NDE) each bind a carbohydrate. Asparagine 126 and aspartate 127 together coordinate Ca(2+). Positions 140–175 (TAACTNTSCSGHGECVETINNYTCKCDPGFSGLKCE) constitute an EGF-like domain. 2 N-linked (GlcNAc...) asparagine glycosylation sites follow: asparagine 145 and asparagine 160. Sushi domains follow at residues 178–239 (VNCT…ACNV), 240–301 (VECD…TCKA), 303–364 (TCRA…VCEA), 366–427 (QCTA…TCEA), 429–490 (RCDA…SCQV), and 491–549 (VKCS…TCEA). Asparagine 179, asparagine 199, and asparagine 203 each carry an N-linked (GlcNAc...) asparagine glycan. 14 disulfide bridges follow: cysteine 180–cysteine 224, cysteine 193–cysteine 206, cysteine 210–cysteine 237, cysteine 242–cysteine 286, cysteine 255–cysteine 268, cysteine 272–cysteine 299, cysteine 304–cysteine 349, cysteine 335–cysteine 362, cysteine 367–cysteine 412, cysteine 398–cysteine 425, cysteine 430–cysteine 475, cysteine 461–cysteine 488, cysteine 493–cysteine 534, and cysteine 520–cysteine 547. N-linked (GlcNAc...) asparagine glycosylation occurs at asparagine 265. Residues asparagine 312 and asparagine 332 are each glycosylated (N-linked (GlcNAc...) asparagine). 2 N-linked (GlcNAc...) asparagine glycosylation sites follow: asparagine 503 and asparagine 527. The helical transmembrane segment at 557–578 (LVAGLSAAGLSLLTLAPFLLWL) threads the bilayer. Residues 579-610 (RKCLRKAKKFVPASSCQSLESDGSYQKPSYIL) are Cytoplasmic-facing.

This sequence belongs to the selectin/LECAM family. As to quaternary structure, interacts with SELPLG/PSGL1 and PODXL2 through the sialyl Lewis X epitope. SELPLG sulfation appears not to be required for this interaction.

It is found in the cell membrane. In terms of biological role, cell-surface glycoprotein having a role in immunoadhesion. Mediates in the adhesion of blood neutrophils in cytokine-activated endothelium through interaction with SELPLG/PSGL1. May have a role in capillary morphogenesis. The protein is E-selectin (SELE) of Homo sapiens (Human).